Reading from the N-terminus, the 160-residue chain is Cytochrome b6-f complex subunit 4 (160 aa).

3 helical membrane-spanning segments follow: residues 36-56 (LLYVFPVVIIGTFACSIGLAI), 95-115 (LLGVLSMAAVPAGLLTVPFIE), and 131-151 (TVFLIGTVVSIWLGIGATMPI).

This sequence belongs to the cytochrome b family. PetD subfamily. In terms of assembly, the 4 large subunits of the cytochrome b6-f complex are cytochrome b6, subunit IV (17 kDa polypeptide, petD), cytochrome f and the Rieske protein, while the 4 small subunits are petG, petL, petM and petN. The complex functions as a dimer.

The protein localises to the plastid. It is found in the chloroplast thylakoid membrane. Functionally, component of the cytochrome b6-f complex, which mediates electron transfer between photosystem II (PSII) and photosystem I (PSI), cyclic electron flow around PSI, and state transitions. The sequence is that of Cytochrome b6-f complex subunit 4 from Pyropia yezoensis (Susabi-nori).